A 917-amino-acid polypeptide reads, in one-letter code: Protein STE5 (917 aa).

Disordered regions lie at residues 1–25 (MMET…YSGT) and 58–151 (FQRS…LSDN). A compositionally biased stretch (polar residues) spans 16–25 (FGSSTQYSGT). Positions 69 to 84 (SPSPISSSTFSFSPKS) are enriched in low complexity. Composition is skewed to polar residues over residues 85–110 (RVTS…STDY) and 118–138 (TSSL…NLSR). Ser329 is subject to Phosphoserine. The segment covering 778–794 (HDDDDEEDNDDSTDNEL) has biased composition (acidic residues). The segment at 778–821 (HDDDDEEDNDDSTDNELDNSSGSLSDAESTTTIHIDSPFDNENA) is disordered. Residues 799–821 (GSLSDAESTTTIHIDSPFDNENA) show a composition bias toward polar residues.

This sequence to yeast FAR1. Post-translationally, may be regulated at the phosphorylation level, and by the mating type of the cell and depends on an intact pheromone-response pathway.

Its subcellular location is the cytoplasm. Its function is as follows. Component of the pheromone signal transduction pathway. It mediates pheromone signals acting between STE20 and STE11. It is absolutely required for pheromone-induced transcription of FUS1. May play a role in cell-cycle arrest in response to pheromone. The protein is Protein STE5 (STE5) of Saccharomyces cerevisiae (strain ATCC 204508 / S288c) (Baker's yeast).